The chain runs to 990 residues: Nucleotide-binding leucine-rich repeat (NLR)-like protein (990 aa).

Residues 22 to 304 form a purine nucleoside phosphorylase domain region; it reads GWICAIPTEL…AVAAAYAKIL (283 aa). The NB-ARC domain maps to 334–563; sequence REEHLRQVLT…TISNYLEVYE (230 aa). TPR repeat units lie at residues 732-765, 774-807, 816-849, 858-891, 900-933, and 942-975; these read RDLL…KKLA, IGSM…MKQV, LGSM…RKQA, LMSM…KQQT, LASM…RKQV, and LQSM…ATLD. Residues 965–990 form a disordered region; sequence QQQQQSQATLDEGRLSKPARKRRKKK. Over residues 981–990 the composition is skewed to basic residues; sequence KPARKRRKKK.

It carries out the reaction ATP + H2O = D-ribose 5-triphosphate + adenine. The enzyme catalyses dATP + H2O = 2-deoxyribose 5-triphosphate + adenine. Functionally, the N-terminal purine nucleoside phosphorylase (PNP) domain cleaves the N-glycosidic bond of ATP, and to a lesser extent dATP; has very weak activity on adenosine and deoxyadenosine and no activity on (d)ADP or (d)AMP. This chain is Nucleotide-binding leucine-rich repeat (NLR)-like protein, found in Hyaloscypha variabilis (strain UAMH 11265 / GT02V1 / F) (Meliniomyces variabilis).